The following is a 199-amino-acid chain: Recombination protein RecR (199 aa).

The C4-type zinc-finger motif lies at 57-72; sequence CQQCRTFTEQNLCAIC. The Toprim domain maps to 81-176; it reads GMICVVEMPV…KVSRIAHGVP (96 aa).

The protein belongs to the RecR family.

Functionally, may play a role in DNA repair. It seems to be involved in an RecBC-independent recombinational process of DNA repair. It may act with RecF and RecO. The polypeptide is Recombination protein RecR (Psychromonas ingrahamii (strain DSM 17664 / CCUG 51855 / 37)).